Reading from the N-terminus, the 199-residue chain is Recombination protein RecR (199 aa).

Residues 57 to 72 form a C4-type zinc finger; the sequence is CRSCRTFTEESHCPIC. Positions 81–176 constitute a Toprim domain; the sequence is EQICVVETPA…SVSRIAHGVP (96 aa).

This sequence belongs to the RecR family.

Its function is as follows. May play a role in DNA repair. It seems to be involved in an RecBC-independent recombinational process of DNA repair. It may act with RecF and RecO. The sequence is that of Recombination protein RecR from Shewanella sediminis (strain HAW-EB3).